The following is a 487-amino-acid chain: ATP-dependent rRNA helicase RRP3 (487 aa).

The disordered stretch occupies residues 22-67; sequence IKRKALEKQQQAHANEPSPSDEDSAQSNSKDSNSNEQPEESEEIFE. The Q motif motif lies at 67–95; sequence ESFTELDLVPELIEACKNLNYNKPTPIQS. A Helicase ATP-binding domain is found at 98 to 270; that stretch reads IPPALKGSDI…RASLTNPVKC (173 aa). ATP is bound at residue 111 to 118; sequence AQTGSGKT. Residues 217–220 carry the DEAD box motif; that stretch reads DEAD. The region spanning 298 to 442 is the Helicase C-terminal domain; it reads LIYLLNEFIG…ENVDKDAILA (145 aa). Residues 459 to 487 are disordered; sequence NRRNKEKQARGKGRRGRMATRDNMDREER. Residues 477–487 are compositionally biased toward basic and acidic residues; that stretch reads ATRDNMDREER.

This sequence belongs to the DEAD box helicase family. DDX47/RRP3 subfamily. In terms of assembly, interacts with the SSU processome.

The protein resides in the nucleus. The enzyme catalyses ATP + H2O = ADP + phosphate + H(+). In terms of biological role, ATP-dependent rRNA helicase required for pre-ribosomal RNA processing. Involved in the maturation of the 35S-pre-rRNA and to its cleavage to mature 18S rRNA. In Kluyveromyces lactis (strain ATCC 8585 / CBS 2359 / DSM 70799 / NBRC 1267 / NRRL Y-1140 / WM37) (Yeast), this protein is ATP-dependent rRNA helicase RRP3.